The following is a 3619-amino-acid chain: BEACH domain-containing protein lvsA (3619 aa).

Disordered stretches follow at residues 1-117, 648-709, 1101-1129, 1367-1390, 1636-1658, 1893-1924, and 1964-1999; these read MFRR…NNNN, KIDD…EKEA, NNNN…NNDQ, SPNL…NSKK, IPTP…RKSI, SSIS…PTSG, and QQAA…NTPN. Residues 17 to 30 are compositionally biased toward pro residues; that stretch reads PQVPHSPGHPPHQP. Low complexity-rich tracts occupy residues 31 to 59, 68 to 87, 97 to 117, 656 to 689, 1101 to 1127, 1375 to 1387, 1640 to 1652, and 1893 to 1923; these read PQQQ…QQPQ, SVSS…SFSS, EESS…NNNN, NNNN…NEEN, NNNN…NNNN, NNNN…GGSN, SSSS…SSTS, and SSIS…TPTS. The WD 1 repeat unit spans residues 94–133; the sequence is SATEESSSINSNNNNNNNKNNNNNNNSNIIESNINVWTIM. Polar residues predominate over residues 1974-1986; that stretch reads MSIQSSPFQSKNL. Positions 2234–2258 form a coiled coil; it reads VKILEKLEADRVGLQKTVQSLYKSL. One copy of the WD 2 repeat lies at 2294–2335; sequence LDSDFMNAFCYPLYKLVISDQHEHVDNSIKLWRLLLSLKTSS. Disordered stretches follow at residues 2403–2457 and 2596–2785; these read KKQH…ITKK and NTSS…SEDE. Positions 2440 to 2452 are enriched in basic and acidic residues; it reads DRKDQSHQEEKSK. Low complexity predominate over residues 2596 to 2662; it reads NTSSITNNNN…TTTPQQSSSQ (67 aa). 2 stretches are compositionally biased toward polar residues: residues 2663 to 2687 and 2694 to 2725; these read IKVS…SSSE and KLQS…SEEN. Composition is skewed to low complexity over residues 2726–2735 and 2742–2764; these read SSLTSASTTL and TQTT…TTTT. The BEACH-type PH domain maps to 2807-2932; that stretch reads KDPRLNGIMY…TRDEVYHTLV (126 aa). The segment at 2940-2971 is disordered; that stretch reads TIGGDAQGITGGQTGNDDNDDHHGGGGGRGVR. The segment covering 2944–2953 has biased composition (gly residues); sequence DAQGITGGQT. The segment covering 2959–2971 has biased composition (basic and acidic residues); the sequence is DDHHGGGGGRGVR. The region spanning 2972 to 3270 is the BEACH domain; it reads DRFTSIWRKS…QLFDKPHPKR (299 aa). 5 WD repeats span residues 3347 to 3386, 3389 to 3428, 3431 to 3471, 3474 to 3518, and 3563 to 3602; these read HHDG…LAKR, GHTG…YVRS, AHEG…NYKT, IAND…LPDN, and SHST…QVKQ. The interval 3516–3539 is disordered; it reads PDNNNSNNNNNNNNNNNNNATQIP. Low complexity predominate over residues 3518–3534; the sequence is NNNSNNNNNNNNNNNNN.

The protein resides in the contractile vacuole membrane. In terms of biological role, involved in myosin-independent cytokinesis and early steps of phagocytosis. Also involved in contractile vacuole-mediated osmoregulation. This is BEACH domain-containing protein lvsA (lvsA) from Dictyostelium discoideum (Social amoeba).